Consider the following 177-residue polypeptide: Large ribosomal subunit protein uL6 (177 aa).

Belongs to the universal ribosomal protein uL6 family. As to quaternary structure, part of the 50S ribosomal subunit.

This protein binds to the 23S rRNA, and is important in its secondary structure. It is located near the subunit interface in the base of the L7/L12 stalk, and near the tRNA binding site of the peptidyltransferase center. The sequence is that of Large ribosomal subunit protein uL6 from Nitrosospira multiformis (strain ATCC 25196 / NCIMB 11849 / C 71).